We begin with the raw amino-acid sequence, 314 residues long: Homoserine O-acetyltransferase (314 aa).

C142 acts as the Acyl-thioester intermediate in catalysis. Positions 163 and 192 each coordinate substrate. H235 (proton acceptor) is an active-site residue. The active site involves E237. R249 serves as a coordination point for substrate.

Belongs to the MetA family.

It is found in the cytoplasm. It catalyses the reaction L-homoserine + acetyl-CoA = O-acetyl-L-homoserine + CoA. It participates in amino-acid biosynthesis; L-methionine biosynthesis via de novo pathway; O-acetyl-L-homoserine from L-homoserine: step 1/1. Transfers an acetyl group from acetyl-CoA to L-homoserine, forming acetyl-L-homoserine. This is Homoserine O-acetyltransferase from Streptococcus thermophilus (strain ATCC BAA-491 / LMD-9).